A 98-amino-acid chain; its full sequence is NADH-ubiquinone oxidoreductase chain 4L (98 aa).

3 helical membrane passes run 1–21, 29–49, and 61–81; these read MSLT…GLLM, SLLC…MTIL, and IILL…LVMV.

This sequence belongs to the complex I subunit 4L family. Core subunit of respiratory chain NADH dehydrogenase (Complex I) which is composed of 45 different subunits.

The protein resides in the mitochondrion inner membrane. It carries out the reaction a ubiquinone + NADH + 5 H(+)(in) = a ubiquinol + NAD(+) + 4 H(+)(out). In terms of biological role, core subunit of the mitochondrial membrane respiratory chain NADH dehydrogenase (Complex I) which catalyzes electron transfer from NADH through the respiratory chain, using ubiquinone as an electron acceptor. Part of the enzyme membrane arm which is embedded in the lipid bilayer and involved in proton translocation. This chain is NADH-ubiquinone oxidoreductase chain 4L (MT-ND4L), found in Chiroderma trinitatum (Little big-eyed bat).